A 4699-amino-acid chain; its full sequence is PKS-NRPS hybrid synthetase cheA (4699 aa).

Positions 1–21 (MSDNDDEWNGFSDDNGEDDGP) are enriched in acidic residues. Disordered regions lie at residues 1–38 (MSDN…WDVP) and 136–165 (DGWR…HTQH). A compositionally biased stretch (basic and acidic residues) spans 136 to 148 (DGWRFHSHPDPQH). The segment at 172–520 (SLDTIAELSN…VQQNVEEMAK (349 aa)) is N-terminal acylcarrier protein transacylase domain (SAT). The tract at residues 625-836 (PLPSVEDNVA…AGAPGARVTR (212 aa)) is disordered. Positions 674-688 (TQGSQGSQGRRTPGS) are enriched in low complexity. Over residues 724-737 (PKRRGRPPGSKNKK) the composition is skewed to basic residues. The region spanning 737 to 1138 (KKDQAPAPAE…GANAHAILEA (402 aa)) is the Ketosynthase family 3 (KS3) domain. Over residues 764–777 (ASAPRRGLRAAPAA) the composition is skewed to low complexity. The span at 802 to 816 (ATASTPRAQSDQGTG) shows a compositional bias: polar residues. Catalysis depends on for beta-ketoacyl synthase activity residues C873, H1012, and H1058. The segment at 1250–1573 (VFTGQGAQWP…VGTLLRQRDA (324 aa)) is malonyl-CoA:ACP transacylase (MAT) domain. Positions 1644–1777 (NELLGTRIMD…ANLIISLGEP (134 aa)) are N-terminal hotdog fold. The region spanning 1644 to 1947 (NELLGTRIMD…TKPLVPPTPS (304 aa)) is the PKS/mFAS DH domain. The tract at residues 1645 to 1941 (ELLGTRIMDN…QLQGLHTKPL (297 aa)) is dehydratase (DH) domain. H1676 (proton acceptor; for dehydratase activity) is an active-site residue. The interval 1794–1947 (MLDVPAERFY…TKPLVPPTPS (154 aa)) is C-terminal hotdog fold. D1854 serves as the catalytic Proton donor; for dehydratase activity. A methyltransferase (MT) domain region spans residues 2050–2241 (LNRFYIEALG…RNTGFSGADE (192 aa)). A ketoreductase (KR) domain region spans residues 2794–2967 (TYWLVGLTGG…PAAAVNIGAV (174 aa)). The Carrier 1 domain occupies 3076-3153 (DASEILEDAY…ALFELVKERA (78 aa)). S3113 bears the O-(pantetheine 4'-phosphoryl)serine mark. The interval 3164-3265 (EQPDQVKSPR…PVASSPDAGL (102 aa)) is disordered. 2 stretches are compositionally biased toward polar residues: residues 3200–3209 (SLDQGSSWDS) and 3218–3233 (GHDS…SSPI). Residues 3268 to 3696 (SVPLSFSQAR…PISRISKPPL (429 aa)) form a condensation (C) domain region. Residues 3730 to 4113 (IQAHPDKLAL…GGLILEGRID (384 aa)) are adenylation (A) domain. The Carrier 2 domain maps to 4236–4316 (EGLPAMQHLI…TMAALVASGS (81 aa)). Residues 4241–4313 (MQHLIKQLWE…TLETMAALVA (73 aa)) form a thiolation and peptide carrier (T) domain region. S4276 is modified (O-(pantetheine 4'-phosphoryl)serine). A reductase (R) domain region spans residues 4367–4598 (LTGSTGFLGR…ISVHTVAAAI (232 aa)).

The protein in the C-terminal section; belongs to the NRP synthetase family.

The protein operates within secondary metabolite biosynthesis. Functionally, PKS-NRPS hybrid synthetase; part of the gene cluster that mediates the biosynthesis of chaetoglobosin A which has a unique inhibitory activity against actin polymerization in mammalian cells. Chaetoglobosin A and its intermediates are involved in the morphological differentiation of C.globosum. The first step of the pathway is the synthesis of prochaetoglobosin I via condensation of one acetyl-CoA, 8 malonyl-CoA, and a L-tryptophan molecule by the PKS-NRPS hybrid synthetase cheA, followed by reduction of backbone double bond to install desired geometry by the enoyl reductase cheB. Further multiple oxidation steps performed by the cytochrome P450 monooxygenases cheE and cheG, as well as by the FAD-linked oxidoreductase cheF, lead to the formation of chaetoglobosin A. Depending on the order of action of these reductases, distinct intermediates can be identified. Within the pathway, the cytochrome P450 monooxygenase cheE catalyzes a stereospecific epoxidation on prochaetoglobosin I, cytoglobosin D, and chaetoglobosin J intermediates. The FAD-linked oxidoreductase cheF performs dehydrogenation of the C-20 hydroxyl groups in the 20-dihyrochaetoglobosin A and cytoglobosin D intermediates. Finally, the cytochrome P450 monooxygenase cheG can catalyze the stereospecific dihydroxylation of prochaetoglobosin I and prochaetoglobosin IV at C-19 and C-20, respectively. The Diels-Alderase cheD may play a role in the post-PKS-NRPS biosynthetic steps catalyzing Diels-Alder cyclization. The protein is PKS-NRPS hybrid synthetase cheA of Chaetomium globosum (strain ATCC 6205 / CBS 148.51 / DSM 1962 / NBRC 6347 / NRRL 1970) (Soil fungus).